The chain runs to 625 residues: Interferon-induced GTP-binding protein Mx2 (625 aa).

Positions aspartate 29–proline 302 constitute a Dynamin-type G domain. The tract at residues glycine 39 to serine 46 is G1 motif. GTP is bound at residue glycine 39 to serine 46. The tract at residues valine 64 to arginine 66 is G2 motif. Residues aspartate 140–glycine 143 are G3 motif. GTP contacts are provided by residues aspartate 140–isoleucine 144 and threonine 209–aspartate 212. Residues threonine 209 to aspartate 212 are G4 motif. Residues arginine 241–glycine 244 are G5 motif. The GED domain maps to arginine 539 to phenylalanine 625.

The protein belongs to the TRAFAC class dynamin-like GTPase superfamily. Dynamin/Fzo/YdjA family.

It is found in the cytoplasm. This chain is Interferon-induced GTP-binding protein Mx2 (mx2), found in Ictalurus punctatus (Channel catfish).